Here is a 113-residue protein sequence, read N- to C-terminus: Phosphoribosyl-ATP pyrophosphatase (113 aa).

The protein belongs to the PRA-PH family.

It is found in the cytoplasm. It catalyses the reaction 1-(5-phospho-beta-D-ribosyl)-ATP + H2O = 1-(5-phospho-beta-D-ribosyl)-5'-AMP + diphosphate + H(+). The protein operates within amino-acid biosynthesis; L-histidine biosynthesis; L-histidine from 5-phospho-alpha-D-ribose 1-diphosphate: step 2/9. The protein is Phosphoribosyl-ATP pyrophosphatase of Hydrogenovibrio crunogenus (strain DSM 25203 / XCL-2) (Thiomicrospira crunogena).